The sequence spans 296 residues: Glycerol-3-phosphate dehydrogenase [NAD(P)+] (296 aa).

Positions 12, 31, and 80 each coordinate NADPH. Sn-glycerol 3-phosphate-binding residues include Lys-80, Gly-108, and Ser-110. Ala-112 is a binding site for NADPH. Sn-glycerol 3-phosphate-binding residues include Lys-162, Asp-215, Ser-225, Arg-226, and Asn-227. The Proton acceptor role is filled by Lys-162. Arg-226 contacts NADPH. The NADPH site is built by Val-250 and Glu-252.

It belongs to the NAD-dependent glycerol-3-phosphate dehydrogenase family.

The protein localises to the cytoplasm. It carries out the reaction sn-glycerol 3-phosphate + NAD(+) = dihydroxyacetone phosphate + NADH + H(+). The enzyme catalyses sn-glycerol 3-phosphate + NADP(+) = dihydroxyacetone phosphate + NADPH + H(+). It participates in membrane lipid metabolism; glycerophospholipid metabolism. Catalyzes the reduction of the glycolytic intermediate dihydroxyacetone phosphate (DHAP) to sn-glycerol 3-phosphate (G3P), the key precursor for phospholipid synthesis. In Sulfurimonas denitrificans (strain ATCC 33889 / DSM 1251) (Thiomicrospira denitrificans (strain ATCC 33889 / DSM 1251)), this protein is Glycerol-3-phosphate dehydrogenase [NAD(P)+].